The primary structure comprises 109 residues: MPQFEWVHAAWLAMAIVLEIVANVFLKFSDGFRRKFYGILSLAAVLAAFSALSQAVKGIDLSVAYALWGGFGIAATLAAGWVLFGQRLNNKGWVGVVLLLIGMIMIKLA.

A run of 4 helical transmembrane segments spans residues 6–26, 36–56, 64–84, and 88–108; these read WVHA…NVFL, FYGI…SQAV, AYAL…WVLF, and LNNK…MIKL.

It belongs to the drug/metabolite transporter (DMT) superfamily. Small multidrug resistance (SMR) (TC 2.A.7.1) family. MdtI subfamily. Forms a complex with MdtJ.

It is found in the cell inner membrane. Catalyzes the excretion of spermidine. The protein is Spermidine export protein MdtI of Citrobacter koseri (strain ATCC BAA-895 / CDC 4225-83 / SGSC4696).